The primary structure comprises 244 residues: Eukaryotic translation initiation factor 6 (244 aa).

The protein belongs to the eIF-6 family. In terms of assembly, monomer. Associates with the 60S ribosomal subunit.

Its subcellular location is the cytoplasm. It is found in the nucleus. It localises to the nucleolus. Binds to the 60S ribosomal subunit and prevents its association with the 40S ribosomal subunit to form the 80S initiation complex in the cytoplasm. May also be involved in ribosome biogenesis. The protein is Eukaryotic translation initiation factor 6 (eif6) of Dictyostelium discoideum (Social amoeba).